Consider the following 594-residue polypeptide: UvrABC system protein C (594 aa).

A GIY-YIG domain is found at 13–99; sequence HSSGVYQYFD…IKQLKPKYNI (87 aa). A UVR domain is found at 205–240; sequence DKLIKELELKMERLSNNLRFEEALIYRDRIAKIQKI.

Belongs to the UvrC family. Interacts with UvrB in an incision complex.

The protein localises to the cytoplasm. Its function is as follows. The UvrABC repair system catalyzes the recognition and processing of DNA lesions. UvrC both incises the 5' and 3' sides of the lesion. The N-terminal half is responsible for the 3' incision and the C-terminal half is responsible for the 5' incision. The sequence is that of UvrABC system protein C from Helicobacter pylori (strain HPAG1).